The primary structure comprises 160 residues: SsrA-binding protein (160 aa).

This sequence belongs to the SmpB family.

The protein localises to the cytoplasm. Its function is as follows. Required for rescue of stalled ribosomes mediated by trans-translation. Binds to transfer-messenger RNA (tmRNA), required for stable association of tmRNA with ribosomes. tmRNA and SmpB together mimic tRNA shape, replacing the anticodon stem-loop with SmpB. tmRNA is encoded by the ssrA gene; the 2 termini fold to resemble tRNA(Ala) and it encodes a 'tag peptide', a short internal open reading frame. During trans-translation Ala-aminoacylated tmRNA acts like a tRNA, entering the A-site of stalled ribosomes, displacing the stalled mRNA. The ribosome then switches to translate the ORF on the tmRNA; the nascent peptide is terminated with the 'tag peptide' encoded by the tmRNA and targeted for degradation. The ribosome is freed to recommence translation, which seems to be the essential function of trans-translation. The polypeptide is SsrA-binding protein (Sodalis glossinidius (strain morsitans)).